Reading from the N-terminus, the 156-residue chain is tRNA-specific adenosine deaminase (156 aa).

Positions 2-120 constitute a CMP/dCMP-type deaminase domain; that stretch reads TNDIYFMTLA…GSLMNLLQQS (119 aa). His-53 is a Zn(2+) binding site. Glu-55 serves as the catalytic Proton donor. Cys-83 and Cys-86 together coordinate Zn(2+).

This sequence belongs to the cytidine and deoxycytidylate deaminase family. As to quaternary structure, homodimer. The cofactor is Zn(2+).

The enzyme catalyses adenosine(34) in tRNA + H2O + H(+) = inosine(34) in tRNA + NH4(+). Catalyzes the deamination of adenosine to inosine at the wobble position 34 of tRNA(Arg2). This Staphylococcus aureus (strain Mu50 / ATCC 700699) protein is tRNA-specific adenosine deaminase.